We begin with the raw amino-acid sequence, 389 residues long: Teichoic acid glycerol-phosphate transferase (389 aa).

It belongs to the CDP-glycerol glycerophosphotransferase family.

The protein resides in the cell membrane. It carries out the reaction 4-O-[(2R)-glycerylphospho]-N-acetyl-beta-D-mannosaminyl-(1-&gt;4)-N-acetyl-alpha-D-glucosaminyl di-trans,octa-cis-undecaprenyl diphosphate + CDP-glycerol = 4-O-[di(2R)-glycerylphospho]-N-acetyl-beta-D-mannosaminyl-(1-&gt;4)-N-acetyl-alpha-D-glucosaminyl di-trans,octa-cis-undecaprenyl diphosphate + CMP + H(+). It functions in the pathway cell wall biogenesis; poly(ribitol phosphate) teichoic acid biosynthesis. Functionally, catalyzes the addition of a second glycerol phosphate unit from CDP-glycerol to the prenolpyrophosphate-linked disaccharide, to complete the linkage unit. This is Teichoic acid glycerol-phosphate transferase (tarF) from Staphylococcus aureus (strain NCTC 8325 / PS 47).